The primary structure comprises 207 residues: Cytochrome c biogenesis ATP-binding export protein CcmA (207 aa).

Residues 4 to 207 enclose the ABC transporter domain; sequence LEARELLCER…RISLTQTRAA (204 aa). Position 36-43 (36-43) interacts with ATP; sequence GSNGAGKT.

This sequence belongs to the ABC transporter superfamily. CcmA exporter (TC 3.A.1.107) family. The complex is composed of two ATP-binding proteins (CcmA) and two transmembrane proteins (CcmB).

The protein localises to the cell inner membrane. It carries out the reaction heme b(in) + ATP + H2O = heme b(out) + ADP + phosphate + H(+). In terms of biological role, part of the ABC transporter complex CcmAB involved in the biogenesis of c-type cytochromes; once thought to export heme, this seems not to be the case, but its exact role is uncertain. Responsible for energy coupling to the transport system. The chain is Cytochrome c biogenesis ATP-binding export protein CcmA from Shigella flexneri.